Reading from the N-terminus, the 95-residue chain is Co-chaperonin GroES (95 aa).

Belongs to the GroES chaperonin family. Heptamer of 7 subunits arranged in a ring. Interacts with the chaperonin GroEL.

The protein resides in the cytoplasm. Together with the chaperonin GroEL, plays an essential role in assisting protein folding. The GroEL-GroES system forms a nano-cage that allows encapsulation of the non-native substrate proteins and provides a physical environment optimized to promote and accelerate protein folding. GroES binds to the apical surface of the GroEL ring, thereby capping the opening of the GroEL channel. The polypeptide is Co-chaperonin GroES (Rickettsia bellii (strain RML369-C)).